The primary structure comprises 107 residues: UPF0213 protein SG0387 (107 aa).

A GIY-YIG domain is found at 4 to 79 (SLWHLYLIRT…KQLSRAQKEH (76 aa)).

Belongs to the UPF0213 family.

This Sodalis glossinidius (strain morsitans) protein is UPF0213 protein SG0387.